The sequence spans 431 residues: MSHFAAIAPPFYSHVRALQNLAQELVARGHRVTFIQQYDIKHLIDSETIGFHSVGTDSHPPGALTRVLHLAAHPLGPSMLKLINEMARTTDMLCRELPQAFNDLAVDGVIVDQMEPAGALVAEALGLPFISVACALPLNREPDMPLAVMPFEYGTSDAARERYAASEKIYDWLMRRHDRVIAEHSHRMGLAPRQKLHQCFSPLAQISQLVPELDFPRKALPACFHAVGPLRETHAPSTSSSRYFTSSEKPRIFASLGTLQGHRYGLFKTIVKACEEIDGQLLLAHCGRLTDSQCEELARSRHTQVVDFADQSAALSQAQLAITHGGMNTVLDAINYRTPLLALPLAFDQPGVASRIVYHGIGKRASRFTTSHALARQMRSLLTNVDFQQRMAKIQTALRLAGGTMAAADIIEQVMCTGQPVLSGSGYATAL.

The protein belongs to the UDP-glycosyltransferase family.

It catalyses the reaction all-trans-zeaxanthin + 2 UDP-alpha-D-glucose = zeaxanthin bis(beta-D-glucoside) + 2 UDP + 2 H(+). The protein operates within carotenoid biosynthesis; zeaxanthin diglucoside biosynthesis. Its function is as follows. Catalyzes the glycosylation reaction which converts zeaxanthin to zeaxanthin bis(beta-D-glucoside). The reaction proceeds in two steps with the monoglucoside as an intermediate. This Pantoea ananas (Erwinia uredovora) protein is Zeaxanthin glucosyltransferase (crtX).